Consider the following 314-residue polypeptide: Serine/threonine-protein phosphatase CPPED1 (314 aa).

The residue at position 2 (Ser-2) is a Phosphoserine. Residues 47–250 (KAWSTGDCDN…KVVFSGHYHR (204 aa)) are catalytic. A divalent metal cation contacts are provided by Asp-53, Asp-90, Asn-127, and His-247. Position 294 is a phosphoserine (Ser-294).

This sequence belongs to the metallophosphoesterase superfamily. CPPED1 family. It depends on a divalent metal cation as a cofactor. In terms of tissue distribution, expressed in subcutaneous adipose tissue.

It localises to the cytoplasm. It carries out the reaction O-phospho-L-seryl-[protein] + H2O = L-seryl-[protein] + phosphate. The enzyme catalyses O-phospho-L-threonyl-[protein] + H2O = L-threonyl-[protein] + phosphate. Its function is as follows. Protein phosphatase that dephosphorylates AKT family kinase specifically at 'Ser-473', blocking cell cycle progression and promoting cell apoptosis. May play an inhibitory role in glucose uptake by adipocytes. The protein is Serine/threonine-protein phosphatase CPPED1 (CPPED1) of Homo sapiens (Human).